A 1003-amino-acid chain; its full sequence is Phosphoenolpyruvate carboxylase (1003 aa).

Residues 1-24 (MIMTVSDPGGSSMSSSSAITPESE) are disordered. Active-site residues include His190 and Lys646.

Belongs to the PEPCase type 1 family. It depends on Mg(2+) as a cofactor.

The enzyme catalyses oxaloacetate + phosphate = phosphoenolpyruvate + hydrogencarbonate. Forms oxaloacetate, a four-carbon dicarboxylic acid source for the tricarboxylic acid cycle. The polypeptide is Phosphoenolpyruvate carboxylase (Synechococcus sp. (strain WH7803)).